Reading from the N-terminus, the 35-residue chain is Basic endochitinase CH1 (35 aa).

Belongs to the glycosyl hydrolase 19 family. Chitinase class I subfamily.

It carries out the reaction Random endo-hydrolysis of N-acetyl-beta-D-glucosaminide (1-&gt;4)-beta-linkages in chitin and chitodextrins.. Its function is as follows. Defense against chitin-containing fungal pathogens. The chain is Basic endochitinase CH1 from Castanea sativa (Sweet chestnut).